A 251-amino-acid chain; its full sequence is NADH-quinone oxidoreductase subunit B (251 aa).

Positions 38, 39, 104, and 134 each coordinate [4Fe-4S] cluster. Residues 208 to 251 (RKGLPPGSMTDVGWIPPEARERLKAGRGAGASGSGEREEGKEGA) are disordered. The segment covering 242–251 (GEREEGKEGA) has biased composition (basic and acidic residues).

This sequence belongs to the complex I 20 kDa subunit family. As to quaternary structure, NDH-1 is composed of 14 different subunits. Subunits NuoB, C, D, E, F, and G constitute the peripheral sector of the complex. It depends on [4Fe-4S] cluster as a cofactor.

It is found in the cell membrane. It catalyses the reaction a quinone + NADH + 5 H(+)(in) = a quinol + NAD(+) + 4 H(+)(out). Functionally, NDH-1 shuttles electrons from NADH, via FMN and iron-sulfur (Fe-S) centers, to quinones in the respiratory chain. The immediate electron acceptor for the enzyme in this species is believed to be a menaquinone. Couples the redox reaction to proton translocation (for every two electrons transferred, four hydrogen ions are translocated across the cytoplasmic membrane), and thus conserves the redox energy in a proton gradient. This is NADH-quinone oxidoreductase subunit B from Rubrobacter xylanophilus (strain DSM 9941 / JCM 11954 / NBRC 16129 / PRD-1).